The following is a 164-amino-acid chain: Single-stranded DNA-binding protein 2 (164 aa).

The 105-residue stretch at 5–109 (INKVILVGNL…IVADEMQMLG (105 aa)) folds into the SSB domain. The segment at 105–164 (MQMLGGRSDGGGMGGGGERPQRQTSQRQDYAPRRQARQPSQSPQSSPPPMDDFADDDIPF) is disordered. The segment covering 111–122 (RSDGGGMGGGGE) has biased composition (gly residues). Residues 159–164 (DDDIPF) carry the Important for interaction with partner proteins motif.

As to quaternary structure, homotetramer.

Its function is as follows. Plays an important role in DNA replication, recombination and repair. Binds to ssDNA and to an array of partner proteins to recruit them to their sites of action during DNA metabolism. The protein is Single-stranded DNA-binding protein 2 (ssb2) of Xylella fastidiosa (strain 9a5c).